A 240-amino-acid polypeptide reads, in one-letter code: MAYASRFLSRSKQLQGGLVILQQQHAIPVRAFAKEAARPTFKGDEMLKGVFFDIKNKFQAAVDILRKEKITLDPEDPAAVKQYANVMKTIRQKADMFSESQRIKHDIDTETQDIPDARAYLLKLQEIRTRRGLTDELGAEAMMFEALEKVEKDIKKPLLRSDKKGMDLLVAEFEKGNKKLGIRKEDLPKYEENLELSMAKAQLDELKSDAVEAMESQKKKEEFQDEEMPDVKSLDIRNFI.

The N-terminal 32 residues, 1–32 (MAYASRFLSRSKQLQGGLVILQQQHAIPVRAF), are a transit peptide targeting the mitochondrion. Basic and acidic residues-rich tracts occupy residues 210-222 (AVEA…KKEE) and 229-240 (PDVKSLDIRNFI). The disordered stretch occupies residues 210–240 (AVEAMESQKKKEEFQDEEMPDVKSLDIRNFI).

It localises to the mitochondrion. The protein resides in the mitochondrion inner membrane. In terms of biological role, mitochondrial membrane ATP synthase (F(1)F(0) ATP synthase or Complex V) produces ATP from ADP in the presence of a proton gradient across the membrane which is generated by electron transport complexes of the respiratory chain. F-type ATPases consist of two structural domains, F(1) - containing the extramembraneous catalytic core and F(0) - containing the membrane proton channel, linked together by a central stalk and a peripheral stalk. During catalysis, ATP synthesis in the catalytic domain of F(1) is coupled via a rotary mechanism of the central stalk subunits to proton translocation. Part of the complex F(0) domain. This is Probable ATP synthase 24 kDa subunit, mitochondrial from Arabidopsis thaliana (Mouse-ear cress).